The chain runs to 562 residues: Tissue-type plasminogen activator (562 aa).

The first 20 residues, 1–20, serve as a signal peptide directing secretion; sequence MNAMKRGLCCVLLLCGAVFA. A propeptide spanning residues 21 to 32 is cleaved from the precursor; sequence LPSQEIHARVRR. Positions 33-35 are cleaved as a propeptide — removed by plasmin; sequence GAR. The Fibronectin type-I domain maps to 39–81; sequence VICRDEKTQMIYQQHQSWLRPVLRSNRVEYCWCNSGRAQCHSV. Disulfide bonds link Cys41–Cys71, Cys69–Cys78, Cys86–Cys97, Cys91–Cys108, Cys110–Cys119, Cys127–Cys208, Cys148–Cys190, Cys179–Cys203, Cys215–Cys296, Cys236–Cys278, Cys267–Cys291, Cys299–Cys430, Cys342–Cys358, Cys350–Cys419, Cys444–Cys519, Cys476–Cys492, and Cys509–Cys537. The interval 42 to 52 is important for binding to annexin A2; it reads RDEKTQMIYQQ. The 39-residue stretch at 82–120 folds into the EGF-like domain; sequence PVRSCSEPRCFNGGTCQQALYFSDFVCQCPEGFAGKCCE. The O-linked (Fuc) threonine glycan is linked to Thr96. 2 Kringle domains span residues 126 to 208 and 214 to 296; these read TCYE…TPAC and DCYF…VPSC. N-linked (GlcNAc...) asparagine glycosylation is present at Asn152. The region spanning 311–561 is the Peptidase S1 domain; that stretch reads IKGGLFADIA…YLDWIHDNMR (251 aa). Active-site charge relay system residues include His357 and Asp406. N-linked (GlcNAc...) asparagine glycosylation is present at Asn483. Residue Ser513 is the Charge relay system of the active site.

Belongs to the peptidase S1 family. As to quaternary structure, heterodimer of chain A and chain B held by a disulfide bond. Binds to fibrin with high affinity. This interaction leads to an increase in the catalytic efficiency of the enzyme due to an increase in affinity for plasminogen. Similarly, binding to heparin increases the activation of plasminogen. Binds to annexin A2, cytokeratin-8, fibronectin and laminin. Binds to mannose receptor and the low-density lipoprotein receptor-related protein (LRP1); these proteins are involved in TPA clearance. Binds LRP1B; binding is followed by internalization and degradation. Forms heterodimer with SERPINA5. Interacts with SERPINE1. In complex with SERPINE1, interacts with SORL1. The single chain, almost fully active enzyme, can be further processed into a two-chain fully active form by a cleavage after Arg-310 catalyzed by plasmin, tissue kallikrein or factor Xa.

The protein resides in the secreted. It is found in the extracellular space. The enzyme catalyses Specific cleavage of Arg-|-Val bond in plasminogen to form plasmin.. Inhibited by SERPINA5. Inhibited by SERPINE1. Functionally, converts the abundant, but inactive, zymogen plasminogen to plasmin by hydrolyzing a single Arg-Val bond in plasminogen. By controlling plasmin-mediated proteolysis, it plays an important role in tissue remodeling and degradation, in cell migration and many other physiopathological events. During oocyte activation, plays a role in cortical granule reaction in the zona reaction, which contributes to the block to polyspermy. The protein is Tissue-type plasminogen activator (PLAT) of Pongo abelii (Sumatran orangutan).